A 317-amino-acid polypeptide reads, in one-letter code: Insulin-like growth factor-binding protein 2 (317 aa).

An N-terminal signal peptide occupies residues 1–33; it reads MQPRLGGPALLLLPPLLLLLLLGAGGGDCGARA. The 92-residue stretch at 35 to 126 folds into the IGFBP N-terminal domain; that stretch reads VLFRCPPCTP…VHGEGTCEKH (92 aa). Intrachain disulfides connect Cys-39-Cys-76, Cys-42-Cys-78, Cys-50-Cys-79, Cys-68-Cys-82, Cys-90-Cys-103, and Cys-97-Cys-123. Disordered stretches follow at residues 125–151 and 189–218; these read KHGD…GGQV and EQHR…ARTP. The Thyroglobulin type-1 domain occupies 216 to 298; that stretch reads RTPCQQELDQ…APTIRGDPEC (83 aa). 3 cysteine pairs are disulfide-bonded: Cys-219–Cys-253, Cys-264–Cys-275, and Cys-277–Cys-298. The short motif at 293 to 295 is the Cell attachment site element; it reads RGD.

In terms of assembly, interacts with IGF1. Interacts with IGF2. Interacts (via RGD motif) with integrin alpha5/ITGA5; this interaction induces cell migration, adhesion or apoptosis according to the context. Interacts with PTPRB; this interaction leads to PTPRB dimerization and inactivation. Cleaved by MMP9 leading to release of free IGF2 from IGFBP2-IGF2 complex, which contributes to enhance the motility and the growth of astrocytes. In terms of processing, O-glycosylated. In terms of tissue distribution, expressed in abundance in selected adult tissues, namely liver, kidney, adrenal, pituitary and choroid plexus.

It is found in the secreted. Functionally, multifunctional protein that plays a critical role in regulating the availability of IGFs such as IGF1 and IGF2 to their receptors and thereby regulates IGF-mediated cellular processes including proliferation, differentiation, and apoptosis in a cell-type specific manner. Functions coordinately with receptor protein tyrosine phosphatase beta/PTPRB and the IGF1 receptor to regulate IGF1-mediated signaling by stimulating the phosphorylation of PTEN leading to its inactivation and AKT1 activation. Plays a positive role in cell migration via interaction with integrin alpha5/ITGA5 through an RGD motif. Additionally, interaction with ITGA5/ITGB1 enhances the adhesion of endothelial progenitor cells to endothelial cells. Upon mitochondrial damage, facilitates apoptosis with ITGA5 of podocytes, and then activates the phosphorylation of focal adhesion kinase (FAK)-mediated mitochondrial injury. The protein is Insulin-like growth factor-binding protein 2 (IGFBP2) of Ovis aries (Sheep).